We begin with the raw amino-acid sequence, 198 residues long: ATP-dependent Clp protease proteolytic subunit (198 aa).

S98 serves as the catalytic Nucleophile. The active site involves H123.

This sequence belongs to the peptidase S14 family. Fourteen ClpP subunits assemble into 2 heptameric rings which stack back to back to give a disk-like structure with a central cavity, resembling the structure of eukaryotic proteasomes.

Its subcellular location is the cytoplasm. The catalysed reaction is Hydrolysis of proteins to small peptides in the presence of ATP and magnesium. alpha-casein is the usual test substrate. In the absence of ATP, only oligopeptides shorter than five residues are hydrolyzed (such as succinyl-Leu-Tyr-|-NHMec, and Leu-Tyr-Leu-|-Tyr-Trp, in which cleavage of the -Tyr-|-Leu- and -Tyr-|-Trp bonds also occurs).. Functionally, cleaves peptides in various proteins in a process that requires ATP hydrolysis. Has a chymotrypsin-like activity. Plays a major role in the degradation of misfolded proteins. The sequence is that of ATP-dependent Clp protease proteolytic subunit from Bacillus pumilus (strain SAFR-032).